Consider the following 1087-residue polypeptide: Collagen alpha-2(I) chain (1087 aa).

A disordered region spans residues 1 to 931 (APDPGPGPMG…PGPAGGGYDV (931 aa)). 3 stretches are compositionally biased toward low complexity: residues 83-120 (EPGA…AAGP), 150-159 (EPGPNGAVGP), and 166-187 (PGNN…AGAP). The segment covering 189 to 199 (FPGPRGGPGPQ) has biased composition (pro residues). Low complexity predominate over residues 201-211 (PQGAAGQRGLA). Residues 218-227 (GVKGDGGPKG) show a composition bias toward gly residues. Composition is skewed to low complexity over residues 228–241 (EPGN…PGPQ), 278–321 (AAGP…AGPS), 335–345 (PRGQPGNLGFP), 360–384 (KGAT…TGAT), and 396–408 (QGAA…QGLP). The span at 409 to 418 (GPAGGAGEAG) shows a compositional bias: gly residues. Residues 443-453 (NPGAAGASGPQ) show a composition bias toward low complexity. Residues 466 to 493 (GTDGGKGEPGAAGAAGGPGHQGPGGMPG) are compositionally biased toward gly residues. Over residues 504-515 (KGEKGEAGHRGP) the composition is skewed to basic and acidic residues. Low complexity-rich tracts occupy residues 560–602 (PAGA…TGAR), 613–640 (FPGA…PAGK), and 677–695 (PGPA…LGLQ). Over residues 708-717 (GSPGGAGAVG) the composition is skewed to gly residues. Low complexity-rich tracts occupy residues 718-740 (EPGR…LGLP) and 776-788 (PGSS…AGAP). A compositionally biased stretch (gly residues) spans 792 to 812 (GPSGGAGRGNRGESGPGGAAG). Residues 813 to 828 (AVGPAGARGAAGPSGP) are compositionally biased toward low complexity. A compositionally biased stretch (basic and acidic residues) spans 829 to 843 (RGEKGVAGEKGERGL). 2 stretches are compositionally biased toward low complexity: residues 849–868 (LQGM…AGPN) and 897–909 (APGA…YVGP). Pro residues predominate over residues 910–924 (AGPPGSPGLPGPPGP). The region spanning 929–1087 (YDVSGYDEYR…GLDLGPVCFK (159 aa)) is the Fibrillar collagen NC1 domain.

The protein belongs to the fibrillar collagen family.

The protein resides in the secreted. Its subcellular location is the extracellular space. The protein localises to the extracellular matrix. In Epinephelus costae (Goldblotch grouper), this protein is Collagen alpha-2(I) chain.